The sequence spans 304 residues: Lipoprotein signal peptidase (304 aa).

3 helical membrane passes run 28–48 (IKIK…IVFV), 86–106 (PAVP…TFIF), and 112–132 (LIVL…DRSV). Active-site residues include Asp148 and Asp163. Residues 163–183 (DICIVTGFALIFLTFVVDIFL) form a helical membrane-spanning segment.

This sequence belongs to the peptidase A8 family.

Its subcellular location is the cell membrane. It carries out the reaction Release of signal peptides from bacterial membrane prolipoproteins. Hydrolyzes -Xaa-Yaa-Zaa-|-(S,diacylglyceryl)Cys-, in which Xaa is hydrophobic (preferably Leu), and Yaa (Ala or Ser) and Zaa (Gly or Ala) have small, neutral side chains.. It participates in protein modification; lipoprotein biosynthesis (signal peptide cleavage). In terms of biological role, this protein specifically catalyzes the removal of signal peptides from prolipoproteins. The chain is Lipoprotein signal peptidase from Mycoplasmoides gallisepticum (strain R(low / passage 15 / clone 2)) (Mycoplasma gallisepticum).